A 346-amino-acid polypeptide reads, in one-letter code: Holliday junction branch migration complex subunit RuvB (346 aa).

The segment at 1–182 is large ATPase domain (RuvB-L); the sequence is MSEPARLISP…FGIPVRLSFY (182 aa). Residues leucine 21, arginine 22, glycine 63, lysine 66, threonine 67, threonine 68, 129–131, arginine 172, tyrosine 182, and arginine 219 contribute to the ATP site; that span reads EDF. Threonine 67 provides a ligand contact to Mg(2+). The segment at 183–253 is small ATPAse domain (RuvB-S); the sequence is TVEELELIVR…IADEALTRLL (71 aa). Residues 256-346 are head domain (RuvB-H); that stretch reads NVGFDQLDKR…AQFRLFQEDN (91 aa). Residues arginine 292, arginine 311, and arginine 316 each coordinate DNA.

This sequence belongs to the RuvB family. Homohexamer. Forms an RuvA(8)-RuvB(12)-Holliday junction (HJ) complex. HJ DNA is sandwiched between 2 RuvA tetramers; dsDNA enters through RuvA and exits via RuvB. An RuvB hexamer assembles on each DNA strand where it exits the tetramer. Each RuvB hexamer is contacted by two RuvA subunits (via domain III) on 2 adjacent RuvB subunits; this complex drives branch migration. In the full resolvosome a probable DNA-RuvA(4)-RuvB(12)-RuvC(2) complex forms which resolves the HJ.

It is found in the cytoplasm. It carries out the reaction ATP + H2O = ADP + phosphate + H(+). In terms of biological role, the RuvA-RuvB-RuvC complex processes Holliday junction (HJ) DNA during genetic recombination and DNA repair, while the RuvA-RuvB complex plays an important role in the rescue of blocked DNA replication forks via replication fork reversal (RFR). RuvA specifically binds to HJ cruciform DNA, conferring on it an open structure. The RuvB hexamer acts as an ATP-dependent pump, pulling dsDNA into and through the RuvAB complex. RuvB forms 2 homohexamers on either side of HJ DNA bound by 1 or 2 RuvA tetramers; 4 subunits per hexamer contact DNA at a time. Coordinated motions by a converter formed by DNA-disengaged RuvB subunits stimulates ATP hydrolysis and nucleotide exchange. Immobilization of the converter enables RuvB to convert the ATP-contained energy into a lever motion, pulling 2 nucleotides of DNA out of the RuvA tetramer per ATP hydrolyzed, thus driving DNA branch migration. The RuvB motors rotate together with the DNA substrate, which together with the progressing nucleotide cycle form the mechanistic basis for DNA recombination by continuous HJ branch migration. Branch migration allows RuvC to scan DNA until it finds its consensus sequence, where it cleaves and resolves cruciform DNA. The protein is Holliday junction branch migration complex subunit RuvB of Rhizobium johnstonii (strain DSM 114642 / LMG 32736 / 3841) (Rhizobium leguminosarum bv. viciae).